The primary structure comprises 212 residues: MLAILDYKAGNQTSVRRALDHLGIPCVITADPAVIAGAHGVIFPGVGAAGQAMNELLTTGLDKVLKDQVQAGKPLLGICVGCQIMLDYSQENDTKALGIVPGECRLFNAAWTEEDGTPIRVPHMGWNSIVQKRPCELLKGIEPEAEFYFVHSYYPAPPESYVIATCTYGEEFCAIHGGPGLWAVQFHPEKSGRPGLALLRNFYAYCKEASRA.

The region spanning 1-212 (MLAILDYKAG…YAYCKEASRA (212 aa)) is the Glutamine amidotransferase type-1 domain. Cys79 functions as the Nucleophile in the catalytic mechanism. Active-site residues include His187 and Glu189.

Heterodimer of HisH and HisF.

It localises to the cytoplasm. It carries out the reaction 5-[(5-phospho-1-deoxy-D-ribulos-1-ylimino)methylamino]-1-(5-phospho-beta-D-ribosyl)imidazole-4-carboxamide + L-glutamine = D-erythro-1-(imidazol-4-yl)glycerol 3-phosphate + 5-amino-1-(5-phospho-beta-D-ribosyl)imidazole-4-carboxamide + L-glutamate + H(+). It catalyses the reaction L-glutamine + H2O = L-glutamate + NH4(+). Its pathway is amino-acid biosynthesis; L-histidine biosynthesis; L-histidine from 5-phospho-alpha-D-ribose 1-diphosphate: step 5/9. Its function is as follows. IGPS catalyzes the conversion of PRFAR and glutamine to IGP, AICAR and glutamate. The HisH subunit catalyzes the hydrolysis of glutamine to glutamate and ammonia as part of the synthesis of IGP and AICAR. The resulting ammonia molecule is channeled to the active site of HisF. The protein is Imidazole glycerol phosphate synthase subunit HisH of Nitratidesulfovibrio vulgaris (strain DSM 19637 / Miyazaki F) (Desulfovibrio vulgaris).